The sequence spans 363 residues: G-protein coupled receptor 4 (363 aa).

The Extracellular portion of the chain corresponds to 1 to 8 (MGNGTWEG). N-linked (GlcNAc...) asparagine glycosylation occurs at Asn3. The helical transmembrane segment at 9–45 (CHVDSRVDHLFPPSLYIFVIGVGLPTNCLALWAAYRQ) threads the bilayer. 2 disulfide bridges follow: Cys9-Cys258 and Cys90-Cys168. Topologically, residues 46-49 (VRQR) are cytoplasmic. Residues 50–80 (NELGVYLMNLSIADLLYICTLPLWVDYFLHH) form a helical membrane-spanning segment. Topologically, residues 81-85 (DNWIH) are extracellular. A helical transmembrane segment spans residues 86 to 121 (GPGSCKLFGFIFYTNIYISIAFLCCISVDRYLAVAH). Over 122–129 (PLRFARLR) the chain is Cytoplasmic. The chain crosses the membrane as a helical span at residues 130-156 (RVKTAVAVSSVVWATELGANSVPLFHD). Topologically, residues 157 to 172 (ELFRDRYNHTFCFEKF) are extracellular. An extracellular loop 2 (ECL2) region spans residues 157 to 172 (ELFRDRYNHTFCFEKF). An N-linked (GlcNAc...) asparagine glycan is attached at Asn164. Residues 173 to 210 (PMEGWVAWMNLYRVFVGFLFPWALMLLSYRGILRAVRG) traverse the membrane as a helical segment. The Cytoplasmic segment spans residues 211–214 (SVST). The helical transmembrane segment at 215–250 (ERQEKAKIKRLALSLIAIVLVCFAPYHVLLLSRSAV) threads the bilayer. Residues 251–260 (YLGHPWDCGF) lie on the Extracellular side of the membrane. A helical membrane pass occupies residues 261 to 289 (EERVFSAYHSSLAFTSLNCVADPILYCLV). Residues 290 to 363 (NEGARSDVAK…QLKMLPPPAP (74 aa)) are Cytoplasmic-facing. The segment at 344-363 (ASPPSQGDQVQLKMLPPPAP) is disordered.

It belongs to the G-protein coupled receptor 1 family.

The protein resides in the cell membrane. Its activity is regulated as follows. Activated by a network of residues that connects an extracellular-facing cavity to Glu-145, a conserved charged residue buried in the transmembrane core of the receptor. Protonation likely drives conformational changes in extracellular loop 2 (ECL2), which stabilizes movement of transmembrane 3 (TM3) and a series of rearrangements that connect the extracellular-facing cavity to Glu-145, a residue only conserved in proton-sensing G-protein coupled receptors. Its function is as follows. Proton-sensing G-protein coupled receptor activated by extracellular pH, which is required to monitor pH changes and generate adaptive reactions. Activated by an optimal pH of 6.8-7.2. Ligand binding causes a conformation change that triggers signaling via guanine nucleotide-binding proteins (G proteins) and modulates the activity of downstream effectors, such as adenylate cyclase. GPR4 is mainly coupled to G(s) G proteins and mediates activation of adenylate cyclase activity. May also couple with G(q) and G(12)/G(13) G proteins. Acts as a key regulator of respiratory sensitivity to CO2/H(+) in brain retrotrapezoid nucleus neurons: acts by mediating detection of protons generated by the formation of carbonic acid in the blood, an important mechanism to impulse to breathe. Also acts as a regulator of acid secretion in the kidney collecting duct by maintaining acid-base homeostasis in the kidney. Acidosis-induced GPR4 activation increases paracellular gap formation and permeability of vascular endothelial cells, possibly through the G(12)/G(13)/Rho GTPase signaling pathway. This chain is G-protein coupled receptor 4 (GPR4), found in Sus scrofa (Pig).